Here is a 336-residue protein sequence, read N- to C-terminus: MKSAKKLLSVLCLGIFILTFTACDMVEKTPEAKAKSTIAKVNGEKIQRKDLDENPRFKQVVSQMKMQYGEEFEKSEQGKEVIKEQKSQILDELITEKILLQKGKELKVIPKDEELNKEADKKVNEIKAVYNNDEKKFEETLKSTGFTKETLKEYLKDQIVIEKVINEATKDVKVEDKDAQKYYNENQSMFTEKPNTMNVSHILVKTEDEAKKVKKRLDAKEDFAKVAKEVSQDTGSKDKGGLLGDINYNDANFDPTFMKAAMALKEGAISNPVHTQFGYHIIKINSKKEYPVKKFDAVKEDIKKQLKQEKQQEAYTKKIEEWKKASKIKTYEKNLL.

Residues 1 to 22 (MKSAKKLLSVLCLGIFILTFTA) form the signal peptide. C23 carries the N-palmitoyl cysteine lipid modification. C23 carries S-diacylglycerol cysteine lipidation. In terms of domain architecture, PpiC spans 194-286 (PNTMNVSHIL…FGYHIIKINS (93 aa)).

This sequence belongs to the PrsA family.

It is found in the cell membrane. The catalysed reaction is [protein]-peptidylproline (omega=180) = [protein]-peptidylproline (omega=0). Functionally, plays a major role in protein secretion by helping the post-translocational extracellular folding of several secreted proteins. The polypeptide is Foldase protein PrsA (Clostridium botulinum (strain 657 / Type Ba4)).